Here is an 88-residue protein sequence, read N- to C-terminus: MANHKSAEKRARQTIKRTERNRFYRTRLKNLTKAVRVAVASGDKDAALVALKDANKNFHSFVSKGFLKKETASRKVSRLAKLVSTLAA.

A disordered region spans residues 1-20; that stretch reads MANHKSAEKRARQTIKRTER.

The protein belongs to the bacterial ribosomal protein bS20 family.

In terms of biological role, binds directly to 16S ribosomal RNA. The sequence is that of Small ribosomal subunit protein bS20 from Campylobacter fetus subsp. fetus (strain 82-40).